Here is a 309-residue protein sequence, read N- to C-terminus: Homoserine O-succinyltransferase (309 aa).

The Acyl-thioester intermediate role is filled by cysteine 142. Lysine 163 and serine 192 together coordinate substrate. Catalysis depends on histidine 235, which acts as the Proton acceptor. Glutamate 237 is a catalytic residue. Arginine 249 lines the substrate pocket.

This sequence belongs to the MetA family.

It localises to the cytoplasm. The enzyme catalyses L-homoserine + succinyl-CoA = O-succinyl-L-homoserine + CoA. It participates in amino-acid biosynthesis; L-methionine biosynthesis via de novo pathway; O-succinyl-L-homoserine from L-homoserine: step 1/1. Transfers a succinyl group from succinyl-CoA to L-homoserine, forming succinyl-L-homoserine. This chain is Homoserine O-succinyltransferase, found in Citrobacter koseri (strain ATCC BAA-895 / CDC 4225-83 / SGSC4696).